The chain runs to 525 residues: Peptide chain release factor 3 (525 aa).

A tr-type G domain is found at 8-276 (AMRRTFAIIS…AFVKEAPPPQ (269 aa)). GTP is bound by residues 17–24 (SHPDAGKT), 85–89 (DTPGH), and 139–142 (NKMD).

Belongs to the TRAFAC class translation factor GTPase superfamily. Classic translation factor GTPase family. PrfC subfamily.

The protein resides in the cytoplasm. Functionally, increases the formation of ribosomal termination complexes and stimulates activities of RF-1 and RF-2. It binds guanine nucleotides and has strong preference for UGA stop codons. It may interact directly with the ribosome. The stimulation of RF-1 and RF-2 is significantly reduced by GTP and GDP, but not by GMP. In Coxiella burnetii (strain RSA 331 / Henzerling II), this protein is Peptide chain release factor 3.